A 338-amino-acid chain; its full sequence is Oligopeptide transport ATP-binding protein OppD (338 aa).

Residues 7 to 257 (LEAKQVSVAF…PKHPYTRSLL (251 aa)) form the ABC transporter domain. An ATP-binding site is contributed by 43-50 (GESGSGKS).

This sequence belongs to the ABC transporter superfamily. As to quaternary structure, the complex is composed of two ATP-binding proteins (OppD and OppF), two transmembrane proteins (OppB and OppC) and a solute-binding protein (OppA).

Its subcellular location is the cell membrane. The catalysed reaction is a [peptide](out) + ATP + H2O = a [peptide](in) + ADP + phosphate + H(+). Functionally, part of the ABC transporter complex OppABCDF involved in the uptake of oligopeptides. Probably responsible for energy coupling to the transport system. Essential for uptake of peptides larger than three amino acids and for growth in milk. The polypeptide is Oligopeptide transport ATP-binding protein OppD (Lactococcus lactis subsp. cremoris (strain SK11)).